Reading from the N-terminus, the 187-residue chain is Protein lethal(2)essential for life (187 aa).

The sHSP domain occupies 61–170; it reads NSLQKQESGS…TERLVQITQT (110 aa). The interval 151 to 187 is disordered; the sequence is APMKALPPPQTERLVQITQTGPSSKEDNAKKVETSTA. A compositionally biased stretch (basic and acidic residues) spans 174-187; it reads SKEDNAKKVETSTA.

Belongs to the small heat shock protein (HSP20) family. As to expression, ubiquitously expressed during embryogenesis with no sign of tissue specificity in expression up to stage 16.

Functionally, vital role in embryonic development. The chain is Protein lethal(2)essential for life (l(2)efl) from Drosophila melanogaster (Fruit fly).